The primary structure comprises 215 residues: ATP-dependent dethiobiotin synthetase BioD (215 aa).

An ATP-binding site is contributed by 13–18; sequence DIGKTV. T17 lines the Mg(2+) pocket. The active site involves K38. Substrate is bound at residue T42. Residues D50, 115–118, and 175–176 contribute to the ATP site; these read EGAG and NH. D50 and E115 together coordinate Mg(2+).

Belongs to the dethiobiotin synthetase family. As to quaternary structure, homodimer. Mg(2+) is required as a cofactor.

It is found in the cytoplasm. The enzyme catalyses (7R,8S)-7,8-diammoniononanoate + CO2 + ATP = (4R,5S)-dethiobiotin + ADP + phosphate + 3 H(+). The protein operates within cofactor biosynthesis; biotin biosynthesis; biotin from 7,8-diaminononanoate: step 1/2. Catalyzes a mechanistically unusual reaction, the ATP-dependent insertion of CO2 between the N7 and N8 nitrogen atoms of 7,8-diaminopelargonic acid (DAPA, also called 7,8-diammoniononanoate) to form a ureido ring. This chain is ATP-dependent dethiobiotin synthetase BioD, found in Neisseria gonorrhoeae (strain NCCP11945).